Consider the following 473-residue polypeptide: Reticulon-4 receptor (473 aa).

Residues 1-26 (MKRASSGGSRLLAWVLWLQAWRVATP) form the signal peptide. 2 disulfide bridges follow: C27–C33 and C31–C43. An LRRNT domain is found at 27–57 (CPGACVCYNEPKVTTSCPQQGLQAVPTGIPA). LRR repeat units lie at residues 58 to 79 (SSQR…SFQS), 82 to 103 (NLTI…AFTG), 106 to 128 (LLEQ…TFHG), 131 to 152 (HLHT…LFRG), 155 to 176 (ALQY…TFRD), 179 to 200 (NLTH…AFRG), 203 to 224 (SLDR…AFRD), and 227 to 248 (RLMT…VLMP). An N-linked (GlcNAc...) asparagine glycan is attached at N82. N-linked (GlcNAc...) asparagine glycosylation is present at N179. The region spanning 260–311 (NPWVCDCRARPLWAWLQKFRGSSSEVPCNLPQRLADRDLKRLAASDLEGCAV) is the LRRCT domain. 3 disulfides stabilise this stretch: C264–C287, C266–C335, and C309–C336. Positions 346–446 (VLEPGRPASA…GASGTGDAEG (101 aa)) are disordered. N372 is a glycosylation site (N-linked (GlcNAc...) asparagine). Residues 413–429 (PRRRPGCSRKNRTRSHC) show a composition bias toward basic residues. Residues 434-445 (AGSGASGTGDAE) show a composition bias toward gly residues. A lipid anchor (GPI-anchor amidated serine) is attached at S447. Residues 448 to 473 (GALPALACSLAPLGLALVLWTVLGPC) constitute a propeptide, removed in mature form.

This sequence belongs to the Nogo receptor family. Homodimer. Interacts with MAG. Interacts with RTN4. Interacts with NGFR. Interacts with LINGO1. Interacts with KIAA0319L. Interacts with OLFM1; this inhibits interaction with LINGO1 and NGFR. Interacts with OMG. N-glycosylated. O-glycosylated. Contains terminal sialic acid groups on its glycan chains. In terms of tissue distribution, detected in embryonic hippocampus neurons. Detected in brain (at protein level). Detected in neurons in the neocortex, in hippocampus, dorsal thalamus, cerebellum granule cell layer and the mitral cell layer in the olfactory bulb. Detected in brain, dorsal root ganglion and heart.

The protein localises to the cell membrane. The protein resides in the membrane raft. It localises to the cell projection. Its subcellular location is the dendrite. It is found in the axon. The protein localises to the perikaryon. In terms of biological role, receptor for RTN4, OMG and MAG. Functions as a receptor for the sialylated gangliosides GT1b and GM1. Besides, functions as a receptor for chondroitin sulfate proteoglycans. Can also bind heparin. Intracellular signaling cascades are triggered via the coreceptor NGFR. Signaling mediates activation of Rho and downstream reorganization of the actin cytoskeleton. Mediates axonal growth inhibition. Mediates axonal growth inhibition and plays a role in regulating axon regeneration and neuronal plasticity in the adult central nervous system. Plays a role in postnatal brain development. Required for normal axon migration across the brain midline and normal formation of the corpus callosum. Protects motoneurons against apoptosis; protection against apoptosis is probably mediated via interaction with MAG. Acts in conjunction with RTN4 and LINGO1 in regulating neuronal precursor cell motility during cortical development. Like other family members, plays a role in restricting the number dendritic spines and the number of synapses that are formed during brain development. In Mus musculus (Mouse), this protein is Reticulon-4 receptor (Rtn4r).